We begin with the raw amino-acid sequence, 279 residues long: Undecaprenyl-diphosphatase (279 aa).

8 helical membrane-spanning segments follow: residues 2–22 (LIIE…TEWL), 44–64 (AFIE…VMLI), 85–105 (WQLW…AVPL), 113–133 (FYFM…FIWI), 163–183 (VLSI…AIIL), 188–208 (TVAA…YSGL), 223–243 (AQVL…LLAI), and 255–275 (FTIF…YSFF).

It belongs to the UppP family.

Its subcellular location is the cell membrane. It carries out the reaction di-trans,octa-cis-undecaprenyl diphosphate + H2O = di-trans,octa-cis-undecaprenyl phosphate + phosphate + H(+). Catalyzes the dephosphorylation of undecaprenyl diphosphate (UPP). Confers resistance to bacitracin. In Streptococcus pyogenes serotype M12 (strain MGAS2096), this protein is Undecaprenyl-diphosphatase.